We begin with the raw amino-acid sequence, 113 residues long: Small ribosomal subunit protein bS6 (113 aa).

The protein belongs to the bacterial ribosomal protein bS6 family.

In terms of biological role, binds together with bS18 to 16S ribosomal RNA. The protein is Small ribosomal subunit protein bS6 (rpsF) of Synechocystis sp. (strain ATCC 27184 / PCC 6803 / Kazusa).